The primary structure comprises 246 residues: Anamorsin homolog (246 aa).

Residues 1-124 are N-terminal SAM-like domain; sequence MRVVVVDLDG…ARGTAFSLKS (124 aa). The segment at 125–158 is linker; that stretch reads RAVRVVTADAGWGADADVDDELIDESALLTELDV. [2Fe-2S] cluster is bound by residues cysteine 168, cysteine 177, cysteine 180, and cysteine 182. The interval 168 to 182 is fe-S binding site A; the sequence is CDVGAGKKACKNCTC. The [4Fe-4S] cluster site is built by cysteine 206, cysteine 209, cysteine 217, and cysteine 220. Short sequence motifs (cx2C motif) lie at residues 206-209 and 217-220; these read CGNC and CAGC. The fe-S binding site B stretch occupies residues 206–220; the sequence is CGNCALGDAFRCAGC.

It belongs to the anamorsin family. In terms of assembly, monomer. [2Fe-2S] cluster serves as cofactor. [4Fe-4S] cluster is required as a cofactor.

It localises to the cytoplasm. Its subcellular location is the mitochondrion intermembrane space. Functionally, component of the cytosolic iron-sulfur (Fe-S) protein assembly (CIA) machinery. Required for the maturation of extramitochondrial Fe-S proteins. Part of an electron transfer chain functioning in an early step of cytosolic Fe-S biogenesis, facilitating the de novo assembly of a [4Fe-4S] cluster on the cytosolic Fe-S scaffold complex. Electrons are transferred from NADPH via a FAD- and FMN-containing diflavin oxidoreductase. Together with the diflavin oxidoreductase, also required for the assembly of the diferric tyrosyl radical cofactor of ribonucleotide reductase (RNR), probably by providing electrons for reduction during radical cofactor maturation in the catalytic small subunit. The sequence is that of Anamorsin homolog from Ostreococcus tauri.